Consider the following 256-residue polypeptide: Probable aquaporin TIP-type alpha (256 aa).

The Cytoplasmic segment spans residues 1-24 (MATRRYSFGRTDEATHPDSMRASL). Ser-7 is modified (phosphoserine; by CPK). Residues 25–44 (AEFASTFIFVFAGEGSGLAL) form a helical membrane-spanning segment. Over 45 to 57 (VKIYQDSAFSAGE) the chain is Vacuolar. A helical transmembrane segment spans residues 58-77 (LLALALAHAFALFAAVSASM). Residues 78 to 102 (HVSGGHVNPAVSFGALIGGRISVIR) lie on the Cytoplasmic side of the membrane. The NPA 1 signature appears at 85–87 (NPA). Residues 103 to 121 (AVYYWIAQLLGSIVAALVL) traverse the membrane as a helical segment. At 122 to 143 (RLVTNNMRPSGFHVSPGVGVGH) the chain is on the vacuolar side. Residues 144 to 164 (MFILEVVMTFGLMYTVYGTAI) form a helical membrane-spanning segment. Residues 165–169 (DPKRG) lie on the Cytoplasmic side of the membrane. The chain crosses the membrane as a helical span at residues 170-189 (AVSYIAPLAIGLIVGANILV). Topologically, residues 190–216 (GGPFDGACMNPALAFGPSLVGWQWHQH) are vacuolar. The NPA 2 signature appears at 199–201 (NPA). Residues 217-239 (WIFWVGPLLGAALAALVYEYAVI) traverse the membrane as a helical segment. The Cytoplasmic portion of the chain corresponds to 240–256 (PIEPPPHHHQPLATEDY).

This sequence belongs to the MIP/aquaporin (TC 1.A.8) family. TIP (TC 1.A.8.10) subfamily. Phosphorylated by a tonoplast-bound calcium-dependent protein kinase. As to expression, found in all seed tissues that are alive at seed maturity, but not in tissues that lose viability during seed maturation.

The protein resides in the vacuole membrane. Channel protein in tonoplast. These proteins may allow the diffusion of amino acids and/or peptides from the vacuolar compartment to the cytoplasm. This Phaseolus vulgaris (Kidney bean) protein is Probable aquaporin TIP-type alpha.